Consider the following 256-residue polypeptide: Endonuclease NucS (256 aa).

The disordered stretch occupies residues 62–97; it reads AAKSAQHSRESVAGGAVDGDSATHSPESVAAGEPEK.

This sequence belongs to the NucS endonuclease family.

The protein localises to the cytoplasm. Cleaves both 3' and 5' ssDNA extremities of branched DNA structures. In Bifidobacterium longum (strain NCC 2705), this protein is Endonuclease NucS.